Here is a 225-residue protein sequence, read N- to C-terminus: MNSIQFPLLDRTTQNSVISTTLNDLSNWSRLSSLWPLLYGTSCCFIEFASLIGSRFDFDRYGLVPRSSPRQADLILTAGTVTMKMAPSLVRLYEQMPEPKYVIAMGACTITGGMFSTDSYSTVRGVDKLIPVDVYLPGCPPKPEAVIDAITKLRKKISRELYEDRIRSQRANRCFTTNHKFHVQHSIHTGNYDQRVLYQPPSTSEIPTEIFFKYKNSVSSPELVN.

Residues cysteine 43, cysteine 44, cysteine 108, and cysteine 139 each contribute to the [4Fe-4S] cluster site.

The protein belongs to the complex I 20 kDa subunit family. NDH is composed of at least 16 different subunits, 5 of which are encoded in the nucleus. The cofactor is [4Fe-4S] cluster.

It is found in the plastid. The protein localises to the chloroplast thylakoid membrane. It catalyses the reaction a plastoquinone + NADH + (n+1) H(+)(in) = a plastoquinol + NAD(+) + n H(+)(out). The catalysed reaction is a plastoquinone + NADPH + (n+1) H(+)(in) = a plastoquinol + NADP(+) + n H(+)(out). Functionally, NDH shuttles electrons from NAD(P)H:plastoquinone, via FMN and iron-sulfur (Fe-S) centers, to quinones in the photosynthetic chain and possibly in a chloroplast respiratory chain. The immediate electron acceptor for the enzyme in this species is believed to be plastoquinone. Couples the redox reaction to proton translocation, and thus conserves the redox energy in a proton gradient. This Nicotiana tabacum (Common tobacco) protein is NAD(P)H-quinone oxidoreductase subunit K, chloroplastic.